Consider the following 256-residue polypeptide: Probable histidine-binding protein (256 aa).

Positions 1 to 19 (MKKFLTAFLVAFTGLFLVA) are cleaved as a signal peptide. C20 is lipidated: N-palmitoyl cysteine. C20 carries S-diacylglycerol cysteine lipidation.

This sequence belongs to the bacterial solute-binding protein 3 family.

It is found in the cell membrane. In terms of biological role, involved in histidine transport. The protein is Probable histidine-binding protein (hisJ) of Campylobacter jejuni subsp. jejuni serotype O:2 (strain ATCC 700819 / NCTC 11168).